A 187-amino-acid polypeptide reads, in one-letter code: UPF0301 protein VC_0467 (187 aa).

This sequence belongs to the UPF0301 (AlgH) family.

The polypeptide is UPF0301 protein VC_0467 (Vibrio cholerae serotype O1 (strain ATCC 39315 / El Tor Inaba N16961)).